Consider the following 542-residue polypeptide: GPI alpha-1,2-mannosyltransferase 3 (542 aa).

Residues 1–36 (MESQAADYNPASRNLHGSSGEMKLRRRKSRQYVSAQ) form a disordered region. The next 8 membrane-spanning stretches (helical) occupy residues 52 to 72 (LVLF…TSFV), 125 to 145 (VQFL…VADI), 213 to 233 (LVAL…PLLF), 244 to 264 (HLTL…SLII), 304 to 324 (GFPV…FLAP), 327 to 347 (LHIL…LGHK), 351 to 371 (FIYP…AHLK), and 376 to 396 (AALS…GLVH). An N-linked (GlcNAc...) asparagine glycan is attached at asparagine 480.

It belongs to the glycosyltransferase 22 family. PIGB subfamily.

It localises to the endoplasmic reticulum membrane. It participates in glycolipid biosynthesis; glycosylphosphatidylinositol-anchor biosynthesis. Alpha-1,2-mannosyltransferase that catalyzes the transfer of the third mannose, via an alpha-1,2 bond, from a dolichol-phosphate-mannose (Dol-P-Man) to an alpha-D-Man-(1-&gt;6)-2-PEtn-alpha-D-Man-(1-&gt;4)-alpha-D-GlcN-(1-&gt;6)-(1-radyl,2-acyl-sn-glycero-3-phospho)-2-acyl-inositol intermediate to generate an alpha-D-Man-(1-&gt;2)-alpha-D-Man-(1-&gt;6)-2-PEtn-alpha-D-Man-(1-&gt;4)-alpha-D-GlcN-(1-&gt;6)-(1-radyl,2-acyl-sn-glycero-3-phospho)-2-acyl-inositol (also termed H6) and participates in the nineth step of the glycosylphosphatidylinositol-anchor biosynthesis. May also add the third mannose to an alpha-D-Man-(1-&gt;6)-alpha-D-Man-(1-&gt;4)-alpha-D-GlcN-(1-&gt;6)-(1-radyl,2-acyl-sn-glycero-3-phospho)-2-acyl-inositol (also termed H3) intermediate generating an alpha-D-Man-(1-&gt;2)-alpha-D-Man-(1-&gt;6)-alpha-D-Man-(1-&gt;4)-alpha-D-GlcN-(1-&gt;6)-(1-radyl,2-acyl-sn-glycero-3-phospho)-2-acyl-inositol (also termed H4). The sequence is that of GPI alpha-1,2-mannosyltransferase 3 from Mus musculus (Mouse).